Here is a 204-residue protein sequence, read N- to C-terminus: Imidazole glycerol phosphate synthase subunit HisH (204 aa).

The 204-residue stretch at 1–204 (MIKIVDYGLG…MTLLKNFSEI (204 aa)) folds into the Glutamine amidotransferase type-1 domain. The Nucleophile role is filled by Cys80. Active-site residues include His186 and Glu188.

As to quaternary structure, heterodimer of HisH and HisF.

Its subcellular location is the cytoplasm. It carries out the reaction 5-[(5-phospho-1-deoxy-D-ribulos-1-ylimino)methylamino]-1-(5-phospho-beta-D-ribosyl)imidazole-4-carboxamide + L-glutamine = D-erythro-1-(imidazol-4-yl)glycerol 3-phosphate + 5-amino-1-(5-phospho-beta-D-ribosyl)imidazole-4-carboxamide + L-glutamate + H(+). The catalysed reaction is L-glutamine + H2O = L-glutamate + NH4(+). It functions in the pathway amino-acid biosynthesis; L-histidine biosynthesis; L-histidine from 5-phospho-alpha-D-ribose 1-diphosphate: step 5/9. Its function is as follows. IGPS catalyzes the conversion of PRFAR and glutamine to IGP, AICAR and glutamate. The HisH subunit catalyzes the hydrolysis of glutamine to glutamate and ammonia as part of the synthesis of IGP and AICAR. The resulting ammonia molecule is channeled to the active site of HisF. This Bdellovibrio bacteriovorus (strain ATCC 15356 / DSM 50701 / NCIMB 9529 / HD100) protein is Imidazole glycerol phosphate synthase subunit HisH.